The following is a 195-amino-acid chain: Nucleoside-triphosphatase THEP1 (195 aa).

ATP contacts are provided by residues 11–18 and 103–110; these read GRPGSGKS and VVVIDEIG.

This sequence belongs to the THEP1 NTPase family.

The enzyme catalyses a ribonucleoside 5'-triphosphate + H2O = a ribonucleoside 5'-diphosphate + phosphate + H(+). Has nucleotide phosphatase activity towards ATP, GTP, CTP, TTP and UTP. May hydrolyze nucleoside diphosphates with lower efficiency. The polypeptide is Nucleoside-triphosphatase THEP1 (Korarchaeum cryptofilum (strain OPF8)).